The primary structure comprises 37 residues: Mastoparan-VT (37 aa).

The propeptide occupies 1-22 (EALADPIADPVAGPNPEADPEA). AXPX repeat units follow at residues 4–7 (ADPI), 8–11 (ADPV), 12–15 (AGPN), and 18–21 (ADPE). A Leucine amide modification is found at L36.

The protein belongs to the MCD family. Mastoparan subfamily. In terms of tissue distribution, expressed by the venom gland.

It localises to the secreted. The protein localises to the target cell membrane. In terms of biological role, antimicrobial peptide with potent activity against both Gram-positive (S.aureus MIC=50 ug/ml, and B.subtilis MIC=25 ug/ml) and Gram-negative bacteria (P.aeruginosa MIC=25 ug/ml, E.coli MIC=3-50 ug/ml, K.pneumoniae MIC=25 ug/ml). Exhibits little hemolytic activity on human erythrocytes. This chain is Mastoparan-VT, found in Vespa tropica (Greater banded hornet).